A 127-amino-acid chain; its full sequence is Large ribosomal subunit protein bL17 (127 aa).

This sequence belongs to the bacterial ribosomal protein bL17 family. Part of the 50S ribosomal subunit. Contacts protein L32.

The polypeptide is Large ribosomal subunit protein bL17 (Legionella pneumophila (strain Corby)).